We begin with the raw amino-acid sequence, 516 residues long: Acetylcholine receptor subunit delta (516 aa).

The first 21 residues, 1-21, serve as a signal peptide directing secretion; the sequence is MEGSVLTLVLLAALVVCGSWG. At 22-244 the chain is on the extracellular side; the sequence is LNEEERLIRH…VTFYLIIRRK (223 aa). 2 N-linked (GlcNAc...) asparagine glycosylation sites follow: N96 and N163. C150 and C164 are oxidised to a cystine. The next 3 membrane-spanning stretches (helical) occupy residues 245–269, 279–296, and 311–332; these read PLFY…VFYL, MAIS…LISK, and FLLF…VLNI. Residues 333–470 are Cytoplasmic-facing; it reads HFRTPSTHVL…WNRVARTVDR (138 aa). The residue at position 389 (Y389) is a Phosphotyrosine; by Tyr-kinases. Residues 471–493 traverse the membrane as a helical segment; it reads LCLFVVTPIMVVGTAWIFLQGAY.

This sequence belongs to the ligand-gated ion channel (TC 1.A.9) family. Acetylcholine receptor (TC 1.A.9.1) subfamily. Delta/CHRND sub-subfamily. As to quaternary structure, pentamer of two alpha chains, and one each of the beta, delta, and gamma (in immature muscle) or epsilon (in mature muscle) chains. The muscle heteropentamer composed of alpha-1, beta-1, delta, epsilon subunits interacts with the alpha-conotoxin ImII.

The protein resides in the postsynaptic cell membrane. It localises to the cell membrane. The enzyme catalyses K(+)(in) = K(+)(out). It catalyses the reaction Na(+)(in) = Na(+)(out). Its function is as follows. After binding acetylcholine, the AChR responds by an extensive change in conformation that affects all subunits and leads to opening of an ion-conducting channel across the plasma membrane. This is Acetylcholine receptor subunit delta (CHRND) from Bos taurus (Bovine).